Here is a 228-residue protein sequence, read N- to C-terminus: Ribose-5-phosphate isomerase A (228 aa).

Residues 29–32 (TGST), 85–88 (DGAD), and 98–101 (KGGG) each bind substrate. Glutamate 107 (proton acceptor) is an active-site residue. Residue lysine 125 coordinates substrate.

It belongs to the ribose 5-phosphate isomerase family. As to quaternary structure, homodimer.

It catalyses the reaction aldehydo-D-ribose 5-phosphate = D-ribulose 5-phosphate. The protein operates within carbohydrate degradation; pentose phosphate pathway; D-ribose 5-phosphate from D-ribulose 5-phosphate (non-oxidative stage): step 1/1. Its function is as follows. Catalyzes the reversible conversion of ribose-5-phosphate to ribulose 5-phosphate. The polypeptide is Ribose-5-phosphate isomerase A (Staphylococcus aureus (strain MRSA252)).